Reading from the N-terminus, the 207-residue chain is Thiamine-phosphate synthase (207 aa).

4-amino-2-methyl-5-(diphosphooxymethyl)pyrimidine is bound by residues 35–39 (QYRDK) and Asn-67. Residues Asp-68 and Asp-86 each coordinate Mg(2+). A 4-amino-2-methyl-5-(diphosphooxymethyl)pyrimidine-binding site is contributed by Thr-105. 2-[(2R,5Z)-2-carboxy-4-methylthiazol-5(2H)-ylidene]ethyl phosphate is bound at residue 132 to 134 (SVT). Lys-135 is a binding site for 4-amino-2-methyl-5-(diphosphooxymethyl)pyrimidine. Position 162 (Gly-162) interacts with 2-[(2R,5Z)-2-carboxy-4-methylthiazol-5(2H)-ylidene]ethyl phosphate.

Belongs to the thiamine-phosphate synthase family. The cofactor is Mg(2+).

The enzyme catalyses 2-[(2R,5Z)-2-carboxy-4-methylthiazol-5(2H)-ylidene]ethyl phosphate + 4-amino-2-methyl-5-(diphosphooxymethyl)pyrimidine + 2 H(+) = thiamine phosphate + CO2 + diphosphate. It carries out the reaction 2-(2-carboxy-4-methylthiazol-5-yl)ethyl phosphate + 4-amino-2-methyl-5-(diphosphooxymethyl)pyrimidine + 2 H(+) = thiamine phosphate + CO2 + diphosphate. The catalysed reaction is 4-methyl-5-(2-phosphooxyethyl)-thiazole + 4-amino-2-methyl-5-(diphosphooxymethyl)pyrimidine + H(+) = thiamine phosphate + diphosphate. It participates in cofactor biosynthesis; thiamine diphosphate biosynthesis; thiamine phosphate from 4-amino-2-methyl-5-diphosphomethylpyrimidine and 4-methyl-5-(2-phosphoethyl)-thiazole: step 1/1. In terms of biological role, condenses 4-methyl-5-(beta-hydroxyethyl)thiazole monophosphate (THZ-P) and 2-methyl-4-amino-5-hydroxymethyl pyrimidine pyrophosphate (HMP-PP) to form thiamine monophosphate (TMP). This is Thiamine-phosphate synthase from Pseudomonas putida (strain ATCC 47054 / DSM 6125 / CFBP 8728 / NCIMB 11950 / KT2440).